The chain runs to 178 residues: Bryoporin (178 aa).

Phosphocholine is bound by residues S51, V83, S102, P104, and Y134. The tract at residues 101–117 (WSVPFDYNLYSNWWNIA) is trp-rich region.

This sequence belongs to the actinoporin family. Plant subfamily.

Inhibited by sphingomyelin. In terms of biological role, actinoporin-related protein having hemolytic activity in vitro. Binds probably a phosphocholine derivative with the unique amido or hydroxyl groups found in sphingomyelin. Involved in drought tolerance. This Physcomitrium patens (Spreading-leaved earth moss) protein is Bryoporin.